The following is a 439-amino-acid chain: Ribosomal protein uS12 methylthiotransferase RimO (439 aa).

One can recognise an MTTase N-terminal domain in the interval 3–118 (KKFYITTLGC…AGKILREKFP (116 aa)). The [4Fe-4S] cluster site is built by C12, C48, C81, C157, C161, and C164. Positions 143-370 (NYSKPYAYVK…RDVHLAILEE (228 aa)) constitute a Radical SAM core domain. Positions 373–438 (ESRIGQTYDA…EYDMNGTWIS (66 aa)) constitute a TRAM domain.

This sequence belongs to the methylthiotransferase family. RimO subfamily. [4Fe-4S] cluster is required as a cofactor.

The protein localises to the cytoplasm. It carries out the reaction L-aspartate(89)-[ribosomal protein uS12]-hydrogen + (sulfur carrier)-SH + AH2 + 2 S-adenosyl-L-methionine = 3-methylsulfanyl-L-aspartate(89)-[ribosomal protein uS12]-hydrogen + (sulfur carrier)-H + 5'-deoxyadenosine + L-methionine + A + S-adenosyl-L-homocysteine + 2 H(+). Functionally, catalyzes the methylthiolation of an aspartic acid residue of ribosomal protein uS12. The chain is Ribosomal protein uS12 methylthiotransferase RimO from Leptospira borgpetersenii serovar Hardjo-bovis (strain JB197).